The primary structure comprises 390 residues: Coiled-coil domain-containing protein 85C (390 aa).

Coiled-coil stretches lie at residues 26–86 and 116–146; these read KEEL…RELC and KEVGTYQQKLKELEAKQESLVRDNLELKEII. The tract at residues 153–237 is disordered; it reads RNGPGSRSSI…RSIPNGLNDS (85 aa). Over residues 157–172 the composition is skewed to polar residues; sequence GSRSSIDSQNSLTNLN. Low complexity predominate over residues 182–194; it reads DGSSTSSTGSAGS.

It belongs to the CCDC85 family.

Its subcellular location is the cell junction. The protein localises to the tight junction. It is found in the adherens junction. May play a role in cell-cell adhesion and epithelium development. May play an important role in cortical development, especially in the maintenance of radial glia. The chain is Coiled-coil domain-containing protein 85C (ccdc85c) from Xenopus laevis (African clawed frog).